The primary structure comprises 169 residues: NADH-quinone oxidoreductase subunit I (169 aa).

2 4Fe-4S ferredoxin-type domains span residues 60-90 (LRRY…IEAE) and 100-129 (TRYD…EGPN). Residues cysteine 70, cysteine 73, cysteine 76, cysteine 80, cysteine 109, cysteine 112, cysteine 115, and cysteine 119 each contribute to the [4Fe-4S] cluster site.

Belongs to the complex I 23 kDa subunit family. As to quaternary structure, NDH-1 is composed of 14 different subunits. Subunits NuoA, H, J, K, L, M, N constitute the membrane sector of the complex. Requires [4Fe-4S] cluster as cofactor.

Its subcellular location is the cell membrane. It catalyses the reaction a quinone + NADH + 5 H(+)(in) = a quinol + NAD(+) + 4 H(+)(out). NDH-1 shuttles electrons from NADH, via FMN and iron-sulfur (Fe-S) centers, to quinones in the respiratory chain. The immediate electron acceptor for the enzyme in this species is believed to be ubiquinone. Couples the redox reaction to proton translocation (for every two electrons transferred, four hydrogen ions are translocated across the cytoplasmic membrane), and thus conserves the redox energy in a proton gradient. The protein is NADH-quinone oxidoreductase subunit I of Wolbachia pipientis wMel.